The primary structure comprises 649 residues: MAALLELEGIRRSYQSGEEIVDVLQDVSLTINAGELVAIIGASGSGKSTLMNILGCLDKPSAGIYRVAGQNVDELDDDALAALRREHFGFIFQRYHLLPHLSAAHNVEVPAVYAGLGKHERRERANMLLTRLGLGDRVSYQPNQLSGGQQQRVSIARALMNGGQVILADEPTGALDSHSSVEVMAILKQLQQQGHTVIIVTHDPTVAAQAERVIEIKDGRIMADSGSKNEPVVAAAELMSLTPAAPSWQQLVGRFREALLMAWRAMSANKMRTALTMLGIIIGIASVVSILVVGDAAKQLVLADIRAIGTNTIDIYPGKDFGDDDPSTRQALVHDDMAALKAQSYVSAVSPSIGGSMRLRFGNIDVAASVLGVSDEYFRVFGMAMEQGAPITREQVERQAQTVVIDLNTQRRLFPHMKDVVGQVILVGNMPATVVGVVAEKKSMFGSNKALRVWVPYSTMANRLMGRSYFDSITIRIKEGYSSKEAEQQLVRLLTLRHGKKDIFTYNMDSLLQTAEKTTQTMQLFLTLVAVISLVVGGIGVMNIMLVSVTERTREIGIRMAVGARSSDVMQQFLIEAVLVCLIGGALGISLSFAIGLIVEMFLPNWRIAFPPMALFSAFLCSTVIGVVFGYLPARSAARLNPIDALARE.

One can recognise an ABC transporter domain in the interval 5–243; that stretch reads LELEGIRRSY…AAAELMSLTP (239 aa). 41-48 serves as a coordination point for ATP; that stretch reads GASGSGKS. Helical transmembrane passes span 274–294, 420–440, 524–544, 578–598, and 608–628; these read ALTM…LVVG, VVGQ…VVAE, LFLT…VMNI, VLVC…IGLI, and IAFP…IGVV.

It belongs to the ABC transporter superfamily. Macrolide exporter (TC 3.A.1.122) family. As to quaternary structure, homodimer. Part of the tripartite efflux system MacAB-TolC, which is composed of an inner membrane transporter, MacB, a periplasmic membrane fusion protein, MacA, and an outer membrane component, TolC. The complex forms a large protein conduit and can translocate molecules across both the inner and outer membranes. Interacts with MacA.

It localises to the cell inner membrane. Part of the tripartite efflux system MacAB-TolC. MacB is a non-canonical ABC transporter that contains transmembrane domains (TMD), which form a pore in the inner membrane, and an ATP-binding domain (NBD), which is responsible for energy generation. Confers resistance against macrolides. This is Macrolide export ATP-binding/permease protein MacB 1 from Yersinia pestis bv. Antiqua (strain Antiqua).